The sequence spans 155 residues: Ribosomal RNA large subunit methyltransferase H (155 aa).

Residues L72, G103, and 122-127 each bind S-adenosyl-L-methionine; that span reads LSDLTL.

This sequence belongs to the RNA methyltransferase RlmH family. As to quaternary structure, homodimer.

The protein resides in the cytoplasm. The catalysed reaction is pseudouridine(1915) in 23S rRNA + S-adenosyl-L-methionine = N(3)-methylpseudouridine(1915) in 23S rRNA + S-adenosyl-L-homocysteine + H(+). Specifically methylates the pseudouridine at position 1915 (m3Psi1915) in 23S rRNA. This Acidovorax sp. (strain JS42) protein is Ribosomal RNA large subunit methyltransferase H.